The chain runs to 71 residues: Translation initiation factor IF-1 (71 aa).

An S1-like domain is found at 1 to 71 (MSKDDLIQFT…LTKGRVIHRH (71 aa)).

This sequence belongs to the IF-1 family. In terms of assembly, component of the 30S ribosomal translation pre-initiation complex which assembles on the 30S ribosome in the order IF-2 and IF-3, IF-1 and N-formylmethionyl-tRNA(fMet); mRNA recruitment can occur at any time during PIC assembly.

The protein localises to the cytoplasm. Its function is as follows. One of the essential components for the initiation of protein synthesis. Stabilizes the binding of IF-2 and IF-3 on the 30S subunit to which N-formylmethionyl-tRNA(fMet) subsequently binds. Helps modulate mRNA selection, yielding the 30S pre-initiation complex (PIC). Upon addition of the 50S ribosomal subunit IF-1, IF-2 and IF-3 are released leaving the mature 70S translation initiation complex. This is Translation initiation factor IF-1 from Rickettsia prowazekii (strain Madrid E).